The sequence spans 264 residues: L-aspartate dehydrogenase (264 aa).

The NAD(+) site is built by alanine 120 and asparagine 186. Residue histidine 216 is part of the active site.

Belongs to the L-aspartate dehydrogenase family.

The catalysed reaction is L-aspartate + NADP(+) + H2O = oxaloacetate + NH4(+) + NADPH + H(+). It catalyses the reaction L-aspartate + NAD(+) + H2O = oxaloacetate + NH4(+) + NADH + H(+). Its pathway is cofactor biosynthesis; NAD(+) biosynthesis; iminoaspartate from L-aspartate (dehydrogenase route): step 1/1. Functionally, specifically catalyzes the NAD or NADP-dependent dehydrogenation of L-aspartate to iminoaspartate. The sequence is that of L-aspartate dehydrogenase from Serratia proteamaculans (strain 568).